A 492-amino-acid polypeptide reads, in one-letter code: Falcipain-3 (492 aa).

The Cytoplasmic portion of the chain corresponds to methionine 1 to serine 35. The propeptide at methionine 1 to lysine 242 is activation peptide. The Bipartite vacuolar targeting signal 1 motif lies at glutamate 16–lysine 25. The helical; Signal-anchor for type II membrane protein transmembrane segment at isoleucine 36–threonine 56 threads the bilayer. The Lumenal segment spans residues arginine 57–glutamate 492. Asparagine 61 carries an N-linked (GlcNAc...) asparagine glycan. A Bipartite vacuolar targeting signal 2 motif is present at residues lysine 84 to lysine 105. The N-linked (GlcNAc...) asparagine glycan is linked to asparagine 129. The Nose motif; required for the correct folding of the mature form signature appears at glutamate 251–leucine 268. Cystine bridges form between cysteine 290-cysteine 331, cysteine 324-cysteine 365, cysteine 350-cysteine 370, and cysteine 419-cysteine 480. Cysteine 293 is a catalytic residue. Histidine 425 is an active-site residue. The short motif at aspartate 436–methionine 445 is the Arm motif; binds to host hemoglobin and required for the inhibitory interaction between the propeptide and the catalytic domain element. Residue asparagine 455 is part of the active site.

This sequence belongs to the peptidase C1 family. In terms of processing, auto-cleavage occurs at acidic pH. The proenzyme is the predominant form in late trophozoites and both the pro and mature enzyme are present in schizonts.

It localises to the membrane. Its subcellular location is the vacuole. It is found in the cytoplasmic vesicle membrane. Inhibited by cysteine protease inhibitor ICP. Functionally, cysteine protease which cleaves native host hemoglobin and globin in the food vacuole during the asexual blood stage. Preferentially cleaves substrates which have an arginine at the P1 position and a leucine at the P2 position. This is Falcipain-3 from Plasmodium falciparum (isolate 3D7).